We begin with the raw amino-acid sequence, 135 residues long: Small ribosomal subunit protein bS18 (135 aa).

Positions 1 to 65 (MARPDMGGPK…GDEGGGRRGF (65 aa)) are disordered. Over residues 9–41 (PKMGGGFGGPRSGGFGGGGGGGGFGGGGFGGGR) the composition is skewed to gly residues. Residues 42–61 (GGDRGDRGDRDDRGGDEGGG) are compositionally biased toward basic and acidic residues.

Belongs to the bacterial ribosomal protein bS18 family. In terms of assembly, part of the 30S ribosomal subunit. Forms a tight heterodimer with protein bS6.

Functionally, binds as a heterodimer with protein bS6 to the central domain of the 16S rRNA, where it helps stabilize the platform of the 30S subunit. In Anaeromyxobacter dehalogenans (strain 2CP-C), this protein is Small ribosomal subunit protein bS18.